The chain runs to 347 residues: Holliday junction branch migration complex subunit RuvB (347 aa).

A large ATPase domain (RuvB-L) region spans residues 13 to 195 (NEDAVTSGEV…FGIVEHMQYY (183 aa)). ATP contacts are provided by residues leucine 34, arginine 35, glycine 76, lysine 79, threonine 80, threonine 81, 142 to 144 (EDY), arginine 185, tyrosine 195, and arginine 232. Threonine 80 serves as a coordination point for Mg(2+). The small ATPAse domain (RuvB-S) stretch occupies residues 196–266 (TIDELEKIVQ…TTEGALKQLQ (71 aa)). The tract at residues 269–347 (DEGLDQTDRR…QLGLPVPGDK (79 aa)) is head domain (RuvB-H). Arginine 329 is a DNA binding site.

It belongs to the RuvB family. Homohexamer. Forms an RuvA(8)-RuvB(12)-Holliday junction (HJ) complex. HJ DNA is sandwiched between 2 RuvA tetramers; dsDNA enters through RuvA and exits via RuvB. An RuvB hexamer assembles on each DNA strand where it exits the tetramer. Each RuvB hexamer is contacted by two RuvA subunits (via domain III) on 2 adjacent RuvB subunits; this complex drives branch migration. In the full resolvosome a probable DNA-RuvA(4)-RuvB(12)-RuvC(2) complex forms which resolves the HJ.

Its subcellular location is the cytoplasm. It carries out the reaction ATP + H2O = ADP + phosphate + H(+). Functionally, the RuvA-RuvB-RuvC complex processes Holliday junction (HJ) DNA during genetic recombination and DNA repair, while the RuvA-RuvB complex plays an important role in the rescue of blocked DNA replication forks via replication fork reversal (RFR). RuvA specifically binds to HJ cruciform DNA, conferring on it an open structure. The RuvB hexamer acts as an ATP-dependent pump, pulling dsDNA into and through the RuvAB complex. RuvB forms 2 homohexamers on either side of HJ DNA bound by 1 or 2 RuvA tetramers; 4 subunits per hexamer contact DNA at a time. Coordinated motions by a converter formed by DNA-disengaged RuvB subunits stimulates ATP hydrolysis and nucleotide exchange. Immobilization of the converter enables RuvB to convert the ATP-contained energy into a lever motion, pulling 2 nucleotides of DNA out of the RuvA tetramer per ATP hydrolyzed, thus driving DNA branch migration. The RuvB motors rotate together with the DNA substrate, which together with the progressing nucleotide cycle form the mechanistic basis for DNA recombination by continuous HJ branch migration. Branch migration allows RuvC to scan DNA until it finds its consensus sequence, where it cleaves and resolves cruciform DNA. This Lactobacillus helveticus (strain DPC 4571) protein is Holliday junction branch migration complex subunit RuvB.